Reading from the N-terminus, the 94-residue chain is Large ribosomal subunit protein uL23 (94 aa).

This sequence belongs to the universal ribosomal protein uL23 family. As to quaternary structure, part of the 50S ribosomal subunit. Contacts protein L29, and trigger factor when it is bound to the ribosome.

One of the early assembly proteins it binds 23S rRNA. One of the proteins that surrounds the polypeptide exit tunnel on the outside of the ribosome. Forms the main docking site for trigger factor binding to the ribosome. The protein is Large ribosomal subunit protein uL23 of Roseiflexus castenholzii (strain DSM 13941 / HLO8).